The chain runs to 273 residues: 2-dehydro-3-deoxyphosphooctonate aldolase (273 aa).

Belongs to the KdsA family.

Its subcellular location is the cytoplasm. It carries out the reaction D-arabinose 5-phosphate + phosphoenolpyruvate + H2O = 3-deoxy-alpha-D-manno-2-octulosonate-8-phosphate + phosphate. It functions in the pathway carbohydrate biosynthesis; 3-deoxy-D-manno-octulosonate biosynthesis; 3-deoxy-D-manno-octulosonate from D-ribulose 5-phosphate: step 2/3. It participates in bacterial outer membrane biogenesis; lipopolysaccharide biosynthesis. This Cyanothece sp. (strain PCC 7425 / ATCC 29141) protein is 2-dehydro-3-deoxyphosphooctonate aldolase.